A 529-amino-acid chain; its full sequence is Putative inorganic phosphate cotransporter (529 aa).

8 consecutive transmembrane segments (helical) span residues 37 to 57 (FATR…AYVM), 110 to 130 (YILS…GILA), 148 to 168 (VFAF…LCAV), 202 to 222 (AVYA…GLLA), 232 to 252 (SIFY…LIFV), 338 to 358 (LPYL…DWMI), 429 to 449 (FLMS…PIAA), and 466 to 486 (IVFF…NIFG). Residues 495–529 (NPEDDEQKPALQTTVTTSPARLSNGSTAPAAISSS) are disordered. Positions 504–529 (ALQTTVTTSPARLSNGSTAPAAISSS) are enriched in polar residues.

It belongs to the major facilitator superfamily. Sodium/anion cotransporter family.

It localises to the membrane. Functionally, may be an inorganic phosphate cotransporter. In Drosophila melanogaster (Fruit fly), this protein is Putative inorganic phosphate cotransporter (Picot).